The chain runs to 65 residues: Large ribosomal subunit protein bL35 (65 aa).

The interval 1-28 (MPKMKTNRSAAKRFGKTGSGKFTRRRQN) is disordered.

It belongs to the bacterial ribosomal protein bL35 family.

In Solidesulfovibrio magneticus (strain ATCC 700980 / DSM 13731 / RS-1) (Desulfovibrio magneticus), this protein is Large ribosomal subunit protein bL35.